Consider the following 228-residue polypeptide: Ribonuclease S-4 (228 aa).

Positions 1–27 (MGITGMTYMFTMVLSLIVLIFSASTVG) are cleaved as a signal peptide. Q36 provides a ligand contact to RNA. A disulfide bond links C42 and C49. H60 contacts RNA. H60 acts as the Proton donor in catalysis. An intrachain disulfide couples C75 to C119. Residue N87 is glycosylated (N-linked (GlcNAc) asparagine). Position 98 to 99 (98 to 99 (NV)) interacts with RNA. N101 carries N-linked (GlcNAc...) asparagine glycosylation. Residues F108, 111-112 (RE), and 115-116 (KH) each bind RNA. Residue E112 is part of the active site. Catalysis depends on H116, which acts as the Proton acceptor. N-linked (GlcNAc...) asparagine glycosylation is found at N144, N160, and N175. Disulfide bonds link C183-C222 and C199-C210.

It belongs to the RNase T2 family. The N-glycans attached at Asn-101, Asn-160 and Asn-175 consist predominantly of disaccharide (GlcNAc-GlcNAc). The N-glycan at 87 is 53% monosaccharide and 47% disaccharide. The N-glycan at Asn-144 contains mannose and xylose.

It localises to the secreted. The protein resides in the extracellular space. The catalysed reaction is a ribonucleotidyl-ribonucleotide-RNA + H2O = a 3'-end 3'-phospho-ribonucleotide-RNA + a 5'-end dephospho-ribonucleoside-RNA + H(+). Functionally, self-incompatibility (SI) is the inherited ability of a flowering plant to prevent self-fertilization by discriminating between self and non-self pollen during pollination. In many species, self-incompatibility is controlled by the single, multiallelic locus S. This chain is Ribonuclease S-4, found in Pyrus pyrifolia (Chinese pear).